We begin with the raw amino-acid sequence, 318 residues long: DNA-directed RNA polymerase subunit alpha 2 (318 aa).

Positions 1-227 (MALENLLHPT…NQLRNILDIE (227 aa)) are alpha N-terminal domain (alpha-NTD). The alpha C-terminal domain (alpha-CTD) stretch occupies residues 242-318 (INPILLKHVE…TLIENWPQDL (77 aa)).

This sequence belongs to the RNA polymerase alpha chain family. As to quaternary structure, homodimer. The RNAP catalytic core consists of 2 alpha, 1 beta, 1 beta' and 1 omega subunit. When a sigma factor is associated with the core the holoenzyme is formed, which can initiate transcription.

The catalysed reaction is RNA(n) + a ribonucleoside 5'-triphosphate = RNA(n+1) + diphosphate. DNA-dependent RNA polymerase catalyzes the transcription of DNA into RNA using the four ribonucleoside triphosphates as substrates. The chain is DNA-directed RNA polymerase subunit alpha 2 from Francisella tularensis subsp. tularensis (strain FSC 198).